Here is a 473-residue protein sequence, read N- to C-terminus: Photosystem II CP43 reaction center protein (473 aa).

Residues 1 to 14 (MKTLYSLRRFYHVE) constitute a propeptide that is removed on maturation. The residue at position 15 (T15) is an N-acetylthreonine. Position 15 is a phosphothreonine (T15). 5 helical membrane-spanning segments follow: residues 69–93 (LFEV…PHLA), 134–155 (LLGP…KDRN), 178–200 (KALY…RKIT), 255–275 (KPFA…LSYS), and 291–312 (WFNN…ASQA). Residue E367 coordinates [CaMn4O5] cluster. A helical membrane pass occupies residues 447–471 (RARAAAAGFEKGIDRDFEPVLSMTP).

This sequence belongs to the PsbB/PsbC family. PsbC subfamily. PSII is composed of 1 copy each of membrane proteins PsbA, PsbB, PsbC, PsbD, PsbE, PsbF, PsbH, PsbI, PsbJ, PsbK, PsbL, PsbM, PsbT, PsbX, PsbY, PsbZ, Psb30/Ycf12, at least 3 peripheral proteins of the oxygen-evolving complex and a large number of cofactors. It forms dimeric complexes. It depends on Binds multiple chlorophylls and provides some of the ligands for the Ca-4Mn-5O cluster of the oxygen-evolving complex. It may also provide a ligand for a Cl- that is required for oxygen evolution. PSII binds additional chlorophylls, carotenoids and specific lipids. as a cofactor.

It localises to the plastid. The protein resides in the chloroplast thylakoid membrane. One of the components of the core complex of photosystem II (PSII). It binds chlorophyll and helps catalyze the primary light-induced photochemical processes of PSII. PSII is a light-driven water:plastoquinone oxidoreductase, using light energy to abstract electrons from H(2)O, generating O(2) and a proton gradient subsequently used for ATP formation. The polypeptide is Photosystem II CP43 reaction center protein (Nicotiana tabacum (Common tobacco)).